The primary structure comprises 273 residues: Transmembrane protein 202 (273 aa).

Helical transmembrane passes span 53–75, 121–141, 155–175, and 189–209; these read HIYIRTLCGSLCSFSLLMLIAMS, FFLISVFTILTGLGWLFSSWI, VSMLSFISATCLLLCLNLFVA, and LLWTYYLNWCSDIFYMFAGII. The disordered stretch occupies residues 242 to 273; the sequence is TTVSPAKDEGPRSEMESLSVREKNLPKSGLWW. Over residues 247–266 the composition is skewed to basic and acidic residues; it reads AKDEGPRSEMESLSVREKNL.

The protein resides in the membrane. The polypeptide is Transmembrane protein 202 (TMEM202) (Homo sapiens (Human)).